The following is a 399-amino-acid chain: Acetate kinase (399 aa).

Residue Asn-8 participates in Mg(2+) binding. Lys-15 lines the ATP pocket. Position 89 (Arg-89) interacts with substrate. Asp-146 serves as the catalytic Proton donor/acceptor. Residues 206–210, 283–285, and 331–335 contribute to the ATP site; these read HVGNG, DMR, and GMGEN. Glu-383 is a Mg(2+) binding site.

It belongs to the acetokinase family. As to quaternary structure, homodimer. It depends on Mg(2+) as a cofactor. Mn(2+) serves as cofactor.

The protein resides in the cytoplasm. It catalyses the reaction acetate + ATP = acetyl phosphate + ADP. Its pathway is metabolic intermediate biosynthesis; acetyl-CoA biosynthesis; acetyl-CoA from acetate: step 1/2. Its function is as follows. Catalyzes the formation of acetyl phosphate from acetate and ATP. Can also catalyze the reverse reaction. The polypeptide is Acetate kinase (Streptococcus equi subsp. equi (strain 4047)).